Reading from the N-terminus, the 114-residue chain is Small ribosomal subunit protein uS17 (114 aa).

This sequence belongs to the universal ribosomal protein uS17 family. Part of the 30S ribosomal subunit.

In terms of biological role, one of the primary rRNA binding proteins, it binds specifically to the 5'-end of 16S ribosomal RNA. This Saccharolobus solfataricus (strain ATCC 35092 / DSM 1617 / JCM 11322 / P2) (Sulfolobus solfataricus) protein is Small ribosomal subunit protein uS17.